The sequence spans 950 residues: A disintegrin and metalloproteinase with thrombospondin motifs 15 (950 aa).

An N-terminal signal peptide occupies residues 1 to 18; the sequence is MLLLGISILALAWRPAGS. Positions 19 to 212 are excised as a propeptide; sequence SEPEWEVVVP…NRRRSGRAKR (194 aa). N141 is a glycosylation site (N-linked (GlcNAc...) asparagine). The disordered stretch occupies residues 144-172; that stretch reads APEAQRHSQGAHLLQRRGAPVGPSGDPTS. Positions 172-179 match the Cysteine switch motif; it reads SRCGVASG. Position 174 (C174) interacts with Zn(2+). Positions 218–427 constitute a Peptidase M12B domain; sequence RYVETLVVAD…GHGDCLLDQP (210 aa). 11 disulfides stabilise this stretch: C293-C345, C322-C327, C339-C422, C377-C406, C448-C470, C459-C480, C465-C499, C493-C504, C528-C565, C532-C570, and C543-C555. H361 is a Zn(2+) binding site. Residue E362 is part of the active site. Zn(2+) contacts are provided by H365 and H371. The 88-residue stretch at 428–515 folds into the Disintegrin domain; that stretch reads SKPITLPEDL…ERHNPNKYRV (88 aa). Positions 516–571 constitute a TSP type-1 1 domain; the sequence is DGSWAKWEPYGSCSRTCGGGVQLARRQCSNPTPANGGKYCEGVRVKYRSCNLEPCP. N-linked (GlcNAc...) asparagine glycosylation is found at N591, N623, and N679. The spacer stretch occupies residues 701 to 838; the sequence is AIPAGASSID…SNQVEQPDNR (138 aa). The segment at 798–822 is disordered; it reads FYLPKEPREDKSTRPKDPRGSPVLR. Over residues 802–816 the composition is skewed to basic and acidic residues; that stretch reads KEPREDKSTRPKDPR. TSP type-1 domains lie at 839-895 and 896-949; these read PPAR…EPCP and TWEL…VLRP.

It depends on Zn(2+) as a cofactor. In terms of processing, the precursor is cleaved by a furin endopeptidase. Glycosylated. Can be O-fucosylated by POFUT2 on a serine or a threonine residue found within the consensus sequence C1-X(2)-(S/T)-C2-G of the TSP type-1 repeat domains where C1 and C2 are the first and second cysteine residue of the repeat, respectively. Fucosylated repeats can then be further glycosylated by the addition of a beta-1,3-glucose residue by the glucosyltransferase, B3GALTL. Fucosylation mediates the efficient secretion of ADAMTS family members. Can be C-glycosylated with one or two mannose molecules on tryptophan residues within the consensus sequence W-X-X-W of the TPRs. Also N-glycosylated. These other glycosylations can also facilitate secretion. In the adult colon, highly expressed in the muscularis externa (inner circular smooth muscle and outer longitudinal smooth muscle), muscularis mucosa, submucosal glands, crypt, villi epithelial cells, goblet cells and lamina propria. Expressed at perimuscular and peritendious areas in the developing limbs.

The protein localises to the secreted. The protein resides in the extracellular space. It localises to the extracellular matrix. It is found in the cell surface. Functionally, metalloprotease which has proteolytic activity against the proteoglycan VCAN, cleaving it at the 'Glu-1401-|-1402-Ala' site. Cleaves VCAN in the pericellular matrix surrounding myoblasts, facilitating myoblast contact and fusion which is required for skeletal muscle development and regeneration. The protein is A disintegrin and metalloproteinase with thrombospondin motifs 15 (Adamts15) of Mus musculus (Mouse).